The primary structure comprises 469 residues: ATP synthase subunit beta (469 aa).

Residue 153-160 (GGAGVGKT) coordinates ATP.

Belongs to the ATPase alpha/beta chains family. In terms of assembly, F-type ATPases have 2 components, CF(1) - the catalytic core - and CF(0) - the membrane proton channel. CF(1) has five subunits: alpha(3), beta(3), gamma(1), delta(1), epsilon(1). CF(0) has three main subunits: a(1), b(2) and c(9-12). The alpha and beta chains form an alternating ring which encloses part of the gamma chain. CF(1) is attached to CF(0) by a central stalk formed by the gamma and epsilon chains, while a peripheral stalk is formed by the delta and b chains.

Its subcellular location is the cell membrane. It catalyses the reaction ATP + H2O + 4 H(+)(in) = ADP + phosphate + 5 H(+)(out). Functionally, produces ATP from ADP in the presence of a proton gradient across the membrane. The catalytic sites are hosted primarily by the beta subunits. In Pediococcus pentosaceus (strain ATCC 25745 / CCUG 21536 / LMG 10740 / 183-1w), this protein is ATP synthase subunit beta.